The following is a 155-amino-acid chain: Biotin carboxyl carrier protein of acetyl-CoA carboxylase (155 aa).

Positions 72-155 (AASDELSGHL…EFDEPLIVIE (84 aa)) constitute a Biotinyl-binding domain. At lysine 121 the chain carries N6-biotinyllysine.

In terms of assembly, homodimer.

The protein operates within lipid metabolism; fatty acid biosynthesis. In terms of biological role, this protein is a component of the acetyl coenzyme A carboxylase complex; first, biotin carboxylase catalyzes the carboxylation of the carrier protein and then the transcarboxylase transfers the carboxyl group to form malonyl-CoA. The chain is Biotin carboxyl carrier protein of acetyl-CoA carboxylase (accB) from Haemophilus influenzae (strain ATCC 51907 / DSM 11121 / KW20 / Rd).